Reading from the N-terminus, the 298-residue chain is Iron-regulated virulence regulatory protein IrgB (298 aa).

The HTH lysR-type domain occupies 1-59 (MQDLSAVKAFHALCQHKSLTAAAKALEQPKSTLSRRLAQLEEDLGQSLLMRQGNRLTLT). The H-T-H motif DNA-binding region spans 19 to 38 (LTAAAKALEQPKSTLSRRLA).

The protein belongs to the LysR transcriptional regulatory family.

Transcription activation of the irgA gene. In the presence of sufficient iron, transcription of both irgA and irgB is negatively regulated by a fur-like protein. In low iron conditions, negative regulation of transcription is removed, and production of IrgB leads to positive transcriptional activation of irgA. In Vibrio cholerae serotype O1 (strain ATCC 39541 / Classical Ogawa 395 / O395), this protein is Iron-regulated virulence regulatory protein IrgB (irgB).